We begin with the raw amino-acid sequence, 497 residues long: Serine hydroxymethyltransferase (497 aa).

Residues Leu176 and 180 to 182 (GHL) contribute to the (6S)-5,6,7,8-tetrahydrofolate site. Residue Lys289 is modified to N6-(pyridoxal phosphate)lysine.

Belongs to the SHMT family. Homodimer. Pyridoxal 5'-phosphate is required as a cofactor.

It is found in the cytoplasm. The catalysed reaction is (6R)-5,10-methylene-5,6,7,8-tetrahydrofolate + glycine + H2O = (6S)-5,6,7,8-tetrahydrofolate + L-serine. The protein operates within one-carbon metabolism; tetrahydrofolate interconversion. Its pathway is amino-acid biosynthesis; glycine biosynthesis; glycine from L-serine: step 1/1. Functionally, catalyzes the reversible interconversion of serine and glycine with tetrahydrofolate (THF) serving as the one-carbon carrier. This reaction serves as the major source of one-carbon groups required for the biosynthesis of purines, thymidylate, methionine, and other important biomolecules. Also exhibits THF-independent aldolase activity toward beta-hydroxyamino acids, producing glycine and aldehydes, via a retro-aldol mechanism. In Chlamydia abortus (strain DSM 27085 / S26/3) (Chlamydophila abortus), this protein is Serine hydroxymethyltransferase.